Consider the following 352-residue polypeptide: [LysW]-L-2-aminoadipate/[LysW]-L-glutamate phosphate reductase (352 aa).

13–16 is an NADP(+) binding site; the sequence is SGYT. Residue cysteine 153 is part of the active site. Asparagine 319 lines the NADP(+) pocket.

The protein belongs to the NAGSA dehydrogenase family. Type 1 subfamily. LysY sub-subfamily.

It localises to the cytoplasm. The enzyme catalyses [amino-group carrier protein]-C-terminal-N-(1-carboxy-5-oxopentan-1-yl)-L-glutamine + phosphate + NADP(+) = [amino-group carrier protein]-C-terminal-N-(1-carboxy-5-phosphooxy-5-oxopentan-1-yl)-L-glutamine + NADPH + H(+). It catalyses the reaction [amino-group carrier protein]-C-terminal-gamma-(L-glutamyl-5-semialdehyde)-L-glutamate + phosphate + NADP(+) = [amino-group carrier protein]-C-terminal-gamma-(5-phospho-L-glutamyl)-L-glutamate + NADPH + H(+). The protein operates within amino-acid biosynthesis; L-lysine biosynthesis via AAA pathway; L-lysine from L-alpha-aminoadipate (Thermus route): step 3/5. Its pathway is amino-acid biosynthesis; L-arginine biosynthesis. Involved in both the arginine and lysine biosynthetic pathways. The protein is [LysW]-L-2-aminoadipate/[LysW]-L-glutamate phosphate reductase of Saccharolobus solfataricus (strain ATCC 35092 / DSM 1617 / JCM 11322 / P2) (Sulfolobus solfataricus).